We begin with the raw amino-acid sequence, 216 residues long: Chaperone protein TorD (216 aa).

This sequence belongs to the TorD/DmsD family. TorD subfamily.

The protein resides in the cytoplasm. Involved in the biogenesis of TorA. Acts on TorA before the insertion of the molybdenum cofactor and, as a result, probably favors a conformation of the apoenzyme that is competent for acquiring the cofactor. The protein is Chaperone protein TorD of Ferrimonas balearica (strain DSM 9799 / CCM 4581 / KCTC 23876 / PAT).